A 121-amino-acid polypeptide reads, in one-letter code: Small basic protein (121 aa).

The next 3 helical transmembrane spans lie at 2-22 (WLPV…NLTI), 29-49 (YLSL…RAHL), and 57-77 (VFVS…FLGV).

Belongs to the sbp family.

It localises to the cell membrane. The protein is Small basic protein (sbp) of Bacillus subtilis (strain 168).